The following is a 658-amino-acid chain: Palmitoyltransferase ZDHHC5-B (658 aa).

The Cytoplasmic segment spans residues 1–24 (MPVGLSVGGALGDPSPSRPFRPSR). Residues 25–45 (YVPVSAATAFLVGATTLFLCF) traverse the membrane as a helical segment. The Extracellular portion of the chain corresponds to 46 to 56 (TCPWLSEKFSS). Residues 57-77 (FIPLYNVVVFLFTLANFCMAT) traverse the membrane as a helical segment. The Cytoplasmic segment spans residues 78–159 (FMDPGVFPRA…NCIGRRNYRY (82 aa)). Positions 115-165 (KWCSTCRFYRPPRCSHCSVCDNCVEEFDHHCPWVNNCIGRRNYRYFFLFLL) constitute a DHHC domain. Cys145 (S-palmitoyl cysteine intermediate) is an active-site residue. Residues 160–180 (FFLFLLSLTVHIMDVFGFSLL) traverse the membrane as a helical segment. Residues 181–202 (YILHHTKQLDLVQSGVTMAVMC) are Extracellular-facing. A helical membrane pass occupies residues 203–223 (VAGLFFVPVAGLTGFHVVLVA). Residues 224–658 (RGRTTNEQVT…VGGTTYEISV (435 aa)) lie on the Cytoplasmic side of the membrane. 3 disordered regions span residues 306-419 (EIME…RSGS), 490-522 (ESLL…LSTA), and 540-658 (QREG…EISV). Positions 360–398 (PGKNHTASTHSSKMSRGNSMTESPSVPVTTGQPSYRSDP) are enriched in polar residues. Over residues 407–419 (GCRGGAEGGRSGS) the composition is skewed to gly residues. Residues 565 to 575 (SSPPSRAPPLS) show a composition bias toward pro residues. The span at 619-633 (SMPNSTIKQNVANHN) shows a compositional bias: polar residues. Residues 634–644 (THSHKPARGVK) show a composition bias toward basic residues.

It belongs to the DHHC palmitoyltransferase family. ERF2/ZDHHC9 subfamily.

Its subcellular location is the cell membrane. It catalyses the reaction L-cysteinyl-[protein] + hexadecanoyl-CoA = S-hexadecanoyl-L-cysteinyl-[protein] + CoA. In terms of biological role, palmitoyltransferase that catalyzes the addition of palmitate onto various protein substrates and is involved in a variety of cellular processes. This Danio rerio (Zebrafish) protein is Palmitoyltransferase ZDHHC5-B.